The sequence spans 465 residues: Innexin-11 (465 aa).

Transmembrane regions (helical) follow at residues 29–49 (LMTPNILLAFSVLISFKQFGG), 105–125 (QWVPFFLLLQAAFFRAPSYLW), 195–215 (SGFISWIYLFTKVLYFLNVFA), and 286–306 (IFVLLWFWYVILLLSSTVSLV). Residues 433–465 (ISTSLMPDKDDIESSSTSSEEDQKRVSNVITNI) form a disordered region.

This sequence belongs to the pannexin family.

Its subcellular location is the cell membrane. It localises to the cell junction. The protein resides in the gap junction. In terms of biological role, structural component of the gap junctions. This is Innexin-11 (inx-11) from Caenorhabditis elegans.